We begin with the raw amino-acid sequence, 180 residues long: Ribulose bisphosphate carboxylase small subunit, chloroplastic 3 (180 aa).

A chloroplast-targeting transit peptide spans 1-56 (MASSLMSNAITAVVGASGAQANMVAPFNGLKSIASFPVTRKSNDITSIASNGGRVQ).

This sequence belongs to the RuBisCO small chain family. Heterohexadecamer of 8 large and 8 small subunits.

It localises to the plastid. It is found in the chloroplast. RuBisCO catalyzes two reactions: the carboxylation of D-ribulose 1,5-bisphosphate, the primary event in carbon dioxide fixation, as well as the oxidative fragmentation of the pentose substrate. Both reactions occur simultaneously and in competition at the same active site. Although the small subunit is not catalytic it is essential for maximal activity. The polypeptide is Ribulose bisphosphate carboxylase small subunit, chloroplastic 3 (Amaranthus hypochondriacus (Prince-of-Wales feather)).